Consider the following 230-residue polypeptide: Vacuole-localized protein 4 (230 aa).

The signal sequence occupies residues M1–A19.

The protein resides in the vacuole. Vacuolar protein required for aerial conidiation and conidial maturation. Also involved in blastospore production and cell cycle. Plays a vital role in the secretion of Pr1 proteases for cuticular penetration and hence contributes significantly to host infection and virulence. In Beauveria bassiana (strain ARSEF 2860) (White muscardine disease fungus), this protein is Vacuole-localized protein 4.